The following is a 489-amino-acid chain: 5-hydroxytryptamine receptor 3A (489 aa).

The first 23 residues, 1-23 (MRLCIPQVLLALFLSMLTAPGEG), serve as a signal peptide directing secretion. Residues 24-246 (SRRRATQARD…MKFYVIIRRR (223 aa)) are Extracellular-facing. Asparagine 109, asparagine 175, and asparagine 191 each carry an N-linked (GlcNAc...) asparagine glycan. A disulfide bridge connects residues cysteine 162 and cysteine 176. Residues 247-273 (PLFYAVSLLLPSIFLMVVDIVGFCLPP) form a helical membrane-spanning segment. Residues 274–278 (DSGER) lie on the Cytoplasmic side of the membrane. Residues 279–297 (VSFKITLLLGYSVFLIIVS) form a helical membrane-spanning segment. The Extracellular segment spans residues 298–307 (DTLPATAIGT). A helical transmembrane segment spans residues 308 to 326 (PLIGVYFVVCMALLVISLA). Residues 327-466 (ETIFIVRLVH…GYVLDRLLFR (140 aa)) are Cytoplasmic-facing. The tract at residues 425-461 (AVRGLLQELSSIRHFLEKRDEMREVARDWLRVGYVLD) is HA-stretch; determines single-channel conductance in 5-HT3 receptors. Residues 467-486 (IYLLAVLAYSITLVTLWSIW) form a helical membrane-spanning segment. At 487–489 (HYS) the chain is on the extracellular side.

This sequence belongs to the ligand-gated ion channel (TC 1.A.9) family. 5-hydroxytryptamine receptor (TC 1.A.9.2) subfamily. HTR3A sub-subfamily. In terms of assembly, forms homopentameric as well as heteropentameric serotonin-activated cation-selective channel complexes with HTR3B or HTR3C or HTR3D or HTR3E. The homomeric complex is functional but exhibits low conductance with modified voltage dependence, and decreased agonist and antagonist affinity. Heteropentameric complexes display properties which resemble that of neuronal serotonin-activated channels in vivo. Interacts with RIC3. Brain, spinal cord, and heart.

It is found in the postsynaptic cell membrane. Its subcellular location is the cell membrane. It carries out the reaction Na(+)(in) = Na(+)(out). It catalyses the reaction K(+)(in) = K(+)(out). The enzyme catalyses Ca(2+)(in) = Ca(2+)(out). The catalysed reaction is Mg(2+)(in) = Mg(2+)(out). Functionally, forms serotonin (5-hydroxytryptamine/5-HT3)-activated cation-selective channel complexes, which when activated cause fast, depolarizing responses in neurons. This chain is 5-hydroxytryptamine receptor 3A, found in Mus musculus (Mouse).